A 234-amino-acid polypeptide reads, in one-letter code: MKFTPEFASGLLIQRYKRFLTDITLEDGTEVTIHCPNTGSMRNCLFPGNKVWFSVSNNPKRKYSRTWEQAQTPDGDIIGINTGRANALAEEAINAGTIVELQGYESLRREVKYGSENSRIDILLTSDAQANCYVEVKSCTLLENGQGYFPDAVTTRGQKHLRELMEMVEQGHRAVLLFVVQHTGIHSVKAAEHIDPAYAKLLSEAHATGVEVLAYSADMSPIAASLVKSCPVKL.

It belongs to the SfsA family.

This chain is Sugar fermentation stimulation protein homolog, found in Shewanella piezotolerans (strain WP3 / JCM 13877).